We begin with the raw amino-acid sequence, 212 residues long: ER lumen protein-retaining receptor 1 (212 aa).

Over 1–4 (MNLF) the chain is Lumenal. Residues 5–24 (RFLGDLSHLLAIILLLLKIW) form a helical membrane-spanning segment. Topologically, residues 25-32 (KSRSCAGI) are cytoplasmic. A helical transmembrane segment spans residues 33-52 (SGKSQVLFAVVFTARYLDLF). Residues 47–48 (RY) are interaction with the K-D-E-L motif on target proteins. Residues 53–58 (TNYISL) lie on the Lumenal side of the membrane. A helical transmembrane segment spans residues 59-79 (YNTCMKVVYIACSFTTVWMIY). The Cytoplasmic portion of the chain corresponds to 80–92 (SKFKATYDGNHDT). The chain crosses the membrane as a helical span at residues 93–110 (FRVEFLVVPTAILAFLVN). The Lumenal portion of the chain corresponds to 111–116 (HDFTPL). Residues 117–135 (EILWTFSIYLESVAILPQL) form a helical membrane-spanning segment. Topologically, residues 136 to 149 (FMVSKTGEAETITS) are cytoplasmic. A helical membrane pass occupies residues 150-168 (HYLFALGVYRTLYLFNWIW). Residues 159–169 (RTLYLFNWIWR) are interaction with the K-D-E-L motif on target proteins. Residues 169–178 (RYHFEGFFDL) lie on the Lumenal side of the membrane. Residues 179 to 199 (IAIVAGLVQTVLYCDFFYLYI) form a helical membrane-spanning segment. Over 200-212 (TKVLKGKKLSLPA) the chain is Cytoplasmic. Residues 204–207 (KGKK) form an important for recycling of cargo proteins with the sequence motif K-D-E-L from the Golgi to the endoplasmic reticulum region. Phosphoserine; by PKA is present on Ser209.

The protein belongs to the ERD2 family. As to quaternary structure, upon ligand binding the receptor oligomerizes and interacts with components of the transport machinery such as ARFGAP1 and ARF1. Post-translationally, phosphorylation by PKA at Ser-209 is required for endoplasmic reticulum retention function.

Its subcellular location is the golgi apparatus membrane. The protein resides in the cytoplasmic vesicle. It is found in the COPI-coated vesicle membrane. It localises to the endoplasmic reticulum membrane. The protein localises to the endoplasmic reticulum-Golgi intermediate compartment membrane. Functionally, receptor for the C-terminal sequence motif K-D-E-L that is present on endoplasmic reticulum resident proteins and that mediates their recycling from the Golgi back to the endoplasmic reticulum. In Mus musculus (Mouse), this protein is ER lumen protein-retaining receptor 1 (Kdelr1).